The sequence spans 499 residues: Glycerol kinase (499 aa).

Thr13 lines the ADP pocket. ATP contacts are provided by Thr13, Thr14, and Ser15. Thr13 serves as a coordination point for sn-glycerol 3-phosphate. Arg17 is an ADP binding site. Sn-glycerol 3-phosphate is bound by residues Arg83, Glu84, Tyr135, and Asp245. Glycerol is bound by residues Arg83, Glu84, Tyr135, Asp245, and Gln246. The ADP site is built by Thr267 and Gly310. The ATP site is built by Thr267, Gly310, Gln314, and Gly411. Positions 411 and 415 each coordinate ADP.

It belongs to the FGGY kinase family.

It catalyses the reaction glycerol + ATP = sn-glycerol 3-phosphate + ADP + H(+). The protein operates within polyol metabolism; glycerol degradation via glycerol kinase pathway; sn-glycerol 3-phosphate from glycerol: step 1/1. With respect to regulation, inhibited by fructose 1,6-bisphosphate (FBP). Functionally, key enzyme in the regulation of glycerol uptake and metabolism. Catalyzes the phosphorylation of glycerol to yield sn-glycerol 3-phosphate. The protein is Glycerol kinase of Stenotrophomonas maltophilia (strain R551-3).